The primary structure comprises 301 residues: Putative S-adenosyl-L-methionine-dependent methyltransferase MAP_3777 (301 aa).

S-adenosyl-L-methionine contacts are provided by residues aspartate 126 and 155–156 (DL).

Belongs to the UPF0677 family.

In terms of biological role, exhibits S-adenosyl-L-methionine-dependent methyltransferase activity. The polypeptide is Putative S-adenosyl-L-methionine-dependent methyltransferase MAP_3777 (Mycolicibacterium paratuberculosis (strain ATCC BAA-968 / K-10) (Mycobacterium paratuberculosis)).